Reading from the N-terminus, the 217-residue chain is Adapter protein MecA (217 aa).

Belongs to the MecA family. Homodimer.

Enables the recognition and targeting of unfolded and aggregated proteins to the ClpC protease or to other proteins involved in proteolysis. Acts negatively in the development of competence by binding ComK and recruiting it to the ClpCP protease. When overexpressed, inhibits sporulation. Also involved in Spx degradation by ClpC. This Alkalihalophilus pseudofirmus (strain ATCC BAA-2126 / JCM 17055 / OF4) (Bacillus pseudofirmus) protein is Adapter protein MecA.